The sequence spans 101 residues: Small ribosomal subunit protein uS14 (101 aa).

This sequence belongs to the universal ribosomal protein uS14 family. Part of the 30S ribosomal subunit. Contacts proteins S3 and S10.

In terms of biological role, binds 16S rRNA, required for the assembly of 30S particles and may also be responsible for determining the conformation of the 16S rRNA at the A site. This Aromatoleum aromaticum (strain DSM 19018 / LMG 30748 / EbN1) (Azoarcus sp. (strain EbN1)) protein is Small ribosomal subunit protein uS14.